The sequence spans 164 residues: Crossover junction endodeoxyribonuclease RuvC (164 aa).

Residues aspartate 7, glutamate 67, and aspartate 139 contribute to the active site. Mg(2+) contacts are provided by aspartate 7, glutamate 67, and aspartate 139.

The protein belongs to the RuvC family. Homodimer which binds Holliday junction (HJ) DNA. The HJ becomes 2-fold symmetrical on binding to RuvC with unstacked arms; it has a different conformation from HJ DNA in complex with RuvA. In the full resolvosome a probable DNA-RuvA(4)-RuvB(12)-RuvC(2) complex forms which resolves the HJ. It depends on Mg(2+) as a cofactor.

The protein localises to the cytoplasm. It carries out the reaction Endonucleolytic cleavage at a junction such as a reciprocal single-stranded crossover between two homologous DNA duplexes (Holliday junction).. In terms of biological role, the RuvA-RuvB-RuvC complex processes Holliday junction (HJ) DNA during genetic recombination and DNA repair. Endonuclease that resolves HJ intermediates. Cleaves cruciform DNA by making single-stranded nicks across the HJ at symmetrical positions within the homologous arms, yielding a 5'-phosphate and a 3'-hydroxyl group; requires a central core of homology in the junction. The consensus cleavage sequence is 5'-(A/T)TT(C/G)-3'. Cleavage occurs on the 3'-side of the TT dinucleotide at the point of strand exchange. HJ branch migration catalyzed by RuvA-RuvB allows RuvC to scan DNA until it finds its consensus sequence, where it cleaves and resolves the cruciform DNA. The chain is Crossover junction endodeoxyribonuclease RuvC from Geobacter sulfurreducens (strain ATCC 51573 / DSM 12127 / PCA).